A 324-amino-acid polypeptide reads, in one-letter code: Glyoxylate/hydroxypyruvate reductase B (324 aa).

Residues R237 and E266 contribute to the active site. The Proton donor role is filled by H285.

It belongs to the D-isomer specific 2-hydroxyacid dehydrogenase family. GhrB subfamily. Homodimer.

It is found in the cytoplasm. It catalyses the reaction glycolate + NADP(+) = glyoxylate + NADPH + H(+). It carries out the reaction (R)-glycerate + NAD(+) = 3-hydroxypyruvate + NADH + H(+). The catalysed reaction is (R)-glycerate + NADP(+) = 3-hydroxypyruvate + NADPH + H(+). Its function is as follows. Catalyzes the NADPH-dependent reduction of glyoxylate and hydroxypyruvate into glycolate and glycerate, respectively. The sequence is that of Glyoxylate/hydroxypyruvate reductase B from Shigella boydii serotype 4 (strain Sb227).